A 460-amino-acid chain; its full sequence is MKGKTAAVQIKNRAKAAATVSEKQLIGRGVRYFPFAFEDKQPNKRKFDNDMQHELRILEELFYYTHDEQSRYISELKAELRKDGFIPENDKDKVLTTFKLKSEFADNENFKNLLIWANKKIPNPNAKANNADSLKANPPPQPLPFPVHGKLLQETQFTADENDEKARQIGTQNNFTETIEMSEIERHIFNKALHIKGKNSQSLFHFDRLQSKLNIQNRNELQNNLLKDWQIEFLGLGQDKQISPDDKLAGCLKILEMVEKHLNESDIPFIGTKEFTPKKLWEIFGTPKQKWVKKDDVKTAIATQNDWYVMDNFAGTSLEEALIQFISERLGDLKSKYDVHLIRNEEVFKLNNFADGEGFMPDFILLLKDKQKSSSNGVNDFLHYQIFIEPKGEHLVETDMWKKEFLEAITAEYGKDKILQKDTPHYRLIGLPFFTDNEKNPKEYEQFTKSFPLGEASLEK.

This is an uncharacterized protein from Haemophilus influenzae (strain ATCC 51907 / DSM 11121 / KW20 / Rd).